Reading from the N-terminus, the 490-residue chain is Betaine aldehyde dehydrogenase (490 aa).

K(+) is bound by residues T26, I27, and D93. An NAD(+)-binding site is contributed by 150–152; the sequence is GAW. Catalysis depends on K162, which acts as the Charge relay system. NAD(+) is bound at residue 176-179; that stretch reads KPSE. Residue V180 participates in K(+) binding. An NAD(+)-binding site is contributed by 230-233; the sequence is GVAS. L246 serves as a coordination point for K(+). E252 serves as the catalytic Proton acceptor. NAD(+)-binding residues include G254, C286, and E387. Residue C286 is the Nucleophile of the active site. Cysteine sulfenic acid (-SOH) is present on C286. K(+) is bound by residues K457 and G460. E464 (charge relay system) is an active-site residue.

Belongs to the aldehyde dehydrogenase family. In terms of assembly, dimer of dimers. The cofactor is K(+).

It carries out the reaction betaine aldehyde + NAD(+) + H2O = glycine betaine + NADH + 2 H(+). It participates in amine and polyamine biosynthesis; betaine biosynthesis via choline pathway; betaine from betaine aldehyde: step 1/1. Functionally, involved in the biosynthesis of the osmoprotectant glycine betaine. Catalyzes the irreversible oxidation of betaine aldehyde to the corresponding acid. This chain is Betaine aldehyde dehydrogenase, found in Escherichia coli (strain K12 / DH10B).